We begin with the raw amino-acid sequence, 116 residues long: M-zodatoxin-Lt6a/b (116 aa).

The signal sequence occupies residues 1–22 (MKYFVVALTLAVAFVCIEECKT). 2 consecutive propeptides follow at residues 23–44 (VEIG…EEAR) and 80–83 (EEAR). Short sequence motifs (processing quadruplet motif) lie at residues 41-44 (EEAR) and 80-83 (EEAR). Pyrrolidone carboxylic acid is present on Q84.

Belongs to the cationic peptide 03 (latarcin) family. 06 subfamily. In terms of processing, cleavage of the propeptide depends on the processing quadruplet motif (XXXR, with at least one of X being E). Expressed by the venom gland.

The protein localises to the secreted. Functionally, does not have antimicrobial activity against neither Gram-positive bacteria (A.globiformis VKM Ac-1112 (MIC&gt;70 uM), and B.subtilis VKM B-501 (MIC&gt;70 uM)), nor Gram-negative bacteria (E.coli DH5-alpha (MIC&gt;70 uM), E.coli MH1 (MIC&gt;70 uM), and P.aeruginosa PAO1 (MIC&gt;70 uM)), nor yeasts (P.pastoris GS115 (MIC&gt;70 uM), and S.cerevisiae Y190 (MIC&gt;70 uM)). Does not have hemolytic activity against rabbit erythrocytes. However, it causes some conductance changes in planar bilayer membranes, without membrane rupture, suggesting a cytolytic function on other biological targets. It causes paralysis, but is not lethal when injected into insect (M.domestica) larvae. This Lachesana tarabaevi (Spider) protein is M-zodatoxin-Lt6a/b.